The chain runs to 1411 residues: Protein three rows (1411 aa).

The tract at residues Val1065–Gln1071 is separase cleavage-site. Disordered stretches follow at residues Leu1221–Pro1240, Val1268–Lys1301, and Ala1330–Asn1411. Low complexity-rich tracts occupy residues Pro1270–Ser1289 and Thr1386–Pro1398.

In terms of assembly, interacts with pim and Sse. Cleavage of thr contributes to inactivation of Sse.

The protein localises to the cytoplasm. Required specifically for chromosome disjunction during all mitoses; maternally provided protein is sufficient until mitosis 14 then zygotic protein is required. Involved in formation and/or maintenance of epithelial structures: bud extension during Malpighian tubule development, and foregut and hindgut morphogenesis. The protein is Protein three rows (thr) of Drosophila virilis (Fruit fly).